Here is a 162-residue protein sequence, read N- to C-terminus: Tripartite terminase subunit 2 (162 aa).

The interval 1–58 is disordered; that stretch reads MYGRSNAPGCQPPVRAHPPSSPMTSRLQLAAMEQNASDAALSGMQQARSRQASPKRLR. A compositionally biased stretch (polar residues) spans 43-52; it reads GMQQARSRQA.

It belongs to the herpesviridae TRM2 protein family. Associates with TRM1 and TRM3 to form the tripartite terminase complex.

It localises to the host nucleus. Component of the molecular motor that translocates viral genomic DNA in empty capsid during DNA packaging. Forms a tripartite terminase complex together with TRM1 and TRM3 in the host cytoplasm. Once the complex reaches the host nucleus, it interacts with the capsid portal vertex. This portal forms a ring in which genomic DNA is translocated into the capsid. This is Tripartite terminase subunit 2 from Equine herpesvirus 1 (strain Ab4p) (EHV-1).